Consider the following 215-residue polypeptide: Protein Syd (215 aa).

This sequence belongs to the Syd family.

Its subcellular location is the cell inner membrane. Interacts with the SecY protein in vivo. May bind preferentially to an uncomplexed state of SecY, thus functioning either as a chelating agent for excess SecY in the cell or as a regulatory factor that negatively controls the translocase function. The protein is Protein Syd of Shewanella piezotolerans (strain WP3 / JCM 13877).